The sequence spans 163 residues: MQNLKIQEEVNSLMRLGQHFDDQLKLASVELGDFSDDDLALLDKCAQYYSLLHIHDINLNYLRDFYCAKKRECIENRQTTVQQRVELQRILSSIEEATRDVVMLERFNAAAEERLIPDIVVMQRNAQQLATKQALLDRQKTLKIPKDFSIESVIEKVDSLEQR.

Positions Glu-86–Leu-115 form a coiled coil.

As to quaternary structure, component of the augmin complex composed of dgt2, dgt3, dgt4, dgt5, dgt6, msd1, msd5 and wac. The complex interacts directly or indirectly with microtubules and is required for centrosome-independent generation of spindle microtubules. wac interacts directly (via coiled coil) with dgt2. As to expression, in adult females, detected only in the abdomen with no expression in the head or thorax (at protein level).

Its subcellular location is the cytoplasm. It is found in the cytoskeleton. The protein localises to the spindle. It localises to the spindle pole. Functionally, as part of the augmin complex, plays a role in centrosome-independent generation of spindle microtubules. The complex is required for mitotic spindle assembly through its involvement in localizing gamma-tubulin to spindle microtubules. wac is dispensable for somatic mitosis and for assembly of spindle microtubules in oocytes during female meiosis but is required during female meiosis for chromosome alignment and segregation. It is required for microtubule assembly near spindle poles in oocytes. It is also required for acentrosomal microtubule nucleation and meiotic spindle formation during male meiosis. wac binds to microtubules in vitro. This chain is Augmin complex subunit wac, found in Drosophila melanogaster (Fruit fly).